Consider the following 326-residue polypeptide: tRNA N6-adenosine threonylcarbamoyltransferase (326 aa).

Fe cation-binding residues include H111 and H115. Residues 134–138, D167, G180, D184, and N268 each bind substrate; that span reads TVSGG. Position 293 (D293) interacts with Fe cation.

Belongs to the KAE1 / TsaD family. The cofactor is Fe(2+).

Its subcellular location is the cytoplasm. The catalysed reaction is L-threonylcarbamoyladenylate + adenosine(37) in tRNA = N(6)-L-threonylcarbamoyladenosine(37) in tRNA + AMP + H(+). Required for the formation of a threonylcarbamoyl group on adenosine at position 37 (t(6)A37) in tRNAs that read codons beginning with adenine. Is involved in the transfer of the threonylcarbamoyl moiety of threonylcarbamoyl-AMP (TC-AMP) to the N6 group of A37, together with TsaE and TsaB. TsaD likely plays a direct catalytic role in this reaction. This chain is tRNA N6-adenosine threonylcarbamoyltransferase, found in Dehalococcoides mccartyi (strain ATCC BAA-2100 / JCM 16839 / KCTC 5957 / BAV1).